A 469-amino-acid chain; its full sequence is Pentatricopeptide repeat-containing protein At2g34370, mitochondrial (469 aa).

A mitochondrion-targeting transit peptide spans 1–65; that stretch reads MVRLVCSRIL…QNRSFVQCRR (65 aa). PPR repeat units lie at residues 142–172, 173–207, 208–238, and 244–274; these read DARS…MPKR, NSET…GNKP, DKEI…MYRD, and SMED…MTVE. The interval 375–469 is type DYW motif; the sequence is DIGFVPATRV…NGVCSCKDYW (95 aa).

It belongs to the PPR family. PCMP-H subfamily.

It is found in the mitochondrion. The polypeptide is Pentatricopeptide repeat-containing protein At2g34370, mitochondrial (PCMP-H25) (Arabidopsis thaliana (Mouse-ear cress)).